The following is a 186-amino-acid chain: Large ribosomal subunit protein uL5 (186 aa).

This sequence belongs to the universal ribosomal protein uL5 family. Part of the 50S ribosomal subunit; part of the 5S rRNA/L5/L18/L25 subcomplex. Contacts the 5S rRNA and the P site tRNA. Forms a bridge to the 30S subunit in the 70S ribosome.

This is one of the proteins that bind and probably mediate the attachment of the 5S RNA into the large ribosomal subunit, where it forms part of the central protuberance. In the 70S ribosome it contacts protein S13 of the 30S subunit (bridge B1b), connecting the 2 subunits; this bridge is implicated in subunit movement. Contacts the P site tRNA; the 5S rRNA and some of its associated proteins might help stabilize positioning of ribosome-bound tRNAs. This chain is Large ribosomal subunit protein uL5, found in Jannaschia sp. (strain CCS1).